A 425-amino-acid polypeptide reads, in one-letter code: Serine--tRNA ligase (425 aa).

231–233 (TAE) provides a ligand contact to L-serine. 262-264 (RSE) lines the ATP pocket. Position 285 (Glu-285) interacts with L-serine. 349–352 (EISS) is an ATP binding site. L-serine is bound at residue Ser-385.

It belongs to the class-II aminoacyl-tRNA synthetase family. Type-1 seryl-tRNA synthetase subfamily. As to quaternary structure, homodimer. The tRNA molecule binds across the dimer.

It is found in the cytoplasm. It catalyses the reaction tRNA(Ser) + L-serine + ATP = L-seryl-tRNA(Ser) + AMP + diphosphate + H(+). The enzyme catalyses tRNA(Sec) + L-serine + ATP = L-seryl-tRNA(Sec) + AMP + diphosphate + H(+). It functions in the pathway aminoacyl-tRNA biosynthesis; selenocysteinyl-tRNA(Sec) biosynthesis; L-seryl-tRNA(Sec) from L-serine and tRNA(Sec): step 1/1. Catalyzes the attachment of serine to tRNA(Ser). Is also able to aminoacylate tRNA(Sec) with serine, to form the misacylated tRNA L-seryl-tRNA(Sec), which will be further converted into selenocysteinyl-tRNA(Sec). In Bacillus licheniformis (strain ATCC 14580 / DSM 13 / JCM 2505 / CCUG 7422 / NBRC 12200 / NCIMB 9375 / NCTC 10341 / NRRL NRS-1264 / Gibson 46), this protein is Serine--tRNA ligase.